A 430-amino-acid polypeptide reads, in one-letter code: Protein arginine methyltransferase NDUFAF7, mitochondrial (430 aa).

The N-terminal 31 residues, 1 to 31 (MSGLARLRKTAFLMVSASANCRIQRYQSSRT), are a transit peptide targeting the mitochondrion.

The protein belongs to the NDUFAF7 family.

It localises to the mitochondrion. It catalyses the reaction L-arginyl-[protein] + 2 S-adenosyl-L-methionine = N(omega),N(omega)'-dimethyl-L-arginyl-[protein] + 2 S-adenosyl-L-homocysteine + 2 H(+). In terms of biological role, arginine methyltransferase involved in the assembly or stability of mitochondrial NADH:ubiquinone oxidoreductase complex (complex I). Acts by mediating symmetric dimethylation of 'Arg-118' of ndufs2 after it assembles into the complex I, stabilizing the early intermediate complex. In Xenopus tropicalis (Western clawed frog), this protein is Protein arginine methyltransferase NDUFAF7, mitochondrial.